The primary structure comprises 365 residues: Peptide chain release factor 2 (365 aa).

Gln-252 bears the N5-methylglutamine mark.

It belongs to the prokaryotic/mitochondrial release factor family. In terms of processing, methylated by PrmC. Methylation increases the termination efficiency of RF2.

The protein resides in the cytoplasm. Its function is as follows. Peptide chain release factor 2 directs the termination of translation in response to the peptide chain termination codons UGA and UAA. In Escherichia coli O8 (strain IAI1), this protein is Peptide chain release factor 2.